Consider the following 384-residue polypeptide: Branched-chain-amino-acid aminotransferase 1, mitochondrial (384 aa).

Residues 1–18 (MALRRCLPQYSTTSSYLS) constitute a mitochondrion transit peptide. An N6-(pyridoxal phosphate)lysine modification is found at Lys-231.

Belongs to the class-IV pyridoxal-phosphate-dependent aminotransferase family. The cofactor is pyridoxal 5'-phosphate.

It localises to the mitochondrion. It catalyses the reaction L-leucine + 2-oxoglutarate = 4-methyl-2-oxopentanoate + L-glutamate. The catalysed reaction is L-isoleucine + 2-oxoglutarate = (S)-3-methyl-2-oxopentanoate + L-glutamate. It carries out the reaction L-valine + 2-oxoglutarate = 3-methyl-2-oxobutanoate + L-glutamate. The protein operates within amino-acid degradation; L-leucine degradation; 4-methyl-2-oxopentanoate from L-leucine (aminotransferase route): step 1/1. Its pathway is amino-acid degradation; L-valine degradation. Its function is as follows. Converts 2-oxo acids to branched-chain amino acids. Acts on leucine, isoleucine and valine. This chain is Branched-chain-amino-acid aminotransferase 1, mitochondrial (BCAT1), found in Arabidopsis thaliana (Mouse-ear cress).